We begin with the raw amino-acid sequence, 353 residues long: Nicotinate-nucleotide--dimethylbenzimidazole phosphoribosyltransferase (353 aa).

Residue Glu-318 is the Proton acceptor of the active site.

This sequence belongs to the CobT family.

It catalyses the reaction 5,6-dimethylbenzimidazole + nicotinate beta-D-ribonucleotide = alpha-ribazole 5'-phosphate + nicotinate + H(+). The protein operates within nucleoside biosynthesis; alpha-ribazole biosynthesis; alpha-ribazole from 5,6-dimethylbenzimidazole: step 1/2. Its function is as follows. Catalyzes the synthesis of alpha-ribazole-5'-phosphate from nicotinate mononucleotide (NAMN) and 5,6-dimethylbenzimidazole (DMB). The protein is Nicotinate-nucleotide--dimethylbenzimidazole phosphoribosyltransferase of Geobacter metallireducens (strain ATCC 53774 / DSM 7210 / GS-15).